Consider the following 869-residue polypeptide: MTESEIPKEYNANEVEKKWMEKWNLSMYHFNWGEDTRPQYIIDTPPPYPTGNFHIGNALNWCYIDFVARYKRMRGYNVMFPQGWDCHGLPTEVKVEETHGITKNQVPRAEFRRMCRELTAGNIDKMRQTMLRLGFSVDWSNEFVTMEPSYFVKTQKSFVRMYNNGHIYHEDHPVNWCPRCETAIAFAEVEYDQGQTKLNFVHFDKVDIATTRPELMAACVAVAVNPEDERYSQYIGKEIEVPLFGQKVTLIADEAVEPEFGTGAVMICTFGDKQDVRWWAKYGLPLIKAIDKQGRMTKAAGKYEGMSIPECRQAVISDLRDAGFLYNQKPLEQNVGLCWRCDTPIEILSEPQWFVKINHEGILKAADEINWYPEYMKVRLQNWTGTMEWDWCISRQRIFATPIPIWYCKKCGEVMIAEESWLPIDPNENVPKKACACGSTEFEPETDVLDTWMDSSITALHVSGWESEHDLRLPAQIRPQGHDIIRTWAFYTILRSLALEGKRPWDSIVINGMVLGPDGHKMSKSLGNVISPEEVTTQYSADAFRQWGAVGGSTGSDVMFRWKDVVSASRFLQKMWSIYRFSMSHLKDFDPADAENFPPDSLYTIDRWLLSKLNRLVESTTKELDGYQFDSTFKAIRGFAWEVLADNYLELVKGRLYGENKEGRKAAQYVLYTTTRTLSLLLAPFIPFFAEEMYSRFDSASVHTRAWPAVNESLMSEEAEAAGEMIKDITGEVRRYKSDLGMALNAPLKKIEIYNTQIDTGDIAGATNSEVELMEGAPSFDYVPVEVKPNMGILGPRFRKDAGAIVKALKAEDPASVEAQIASGRITVTVNGEKIELEPEAVEIRKEVISGGREVDVLDIKGAVVVIVR.

The 'HIGH' region signature appears at 47 to 57; the sequence is PYPTGNFHIGN. The short motif at 521 to 525 is the 'KMSKS' region element; the sequence is KMSKS. Lysine 524 contributes to the ATP binding site.

This sequence belongs to the class-I aminoacyl-tRNA synthetase family. ValS type 2 subfamily.

It localises to the cytoplasm. The enzyme catalyses tRNA(Val) + L-valine + ATP = L-valyl-tRNA(Val) + AMP + diphosphate. In terms of biological role, catalyzes the attachment of valine to tRNA(Val). As ValRS can inadvertently accommodate and process structurally similar amino acids such as threonine, to avoid such errors, it has a 'posttransfer' editing activity that hydrolyzes mischarged Thr-tRNA(Val) in a tRNA-dependent manner. The protein is Valine--tRNA ligase of Methanosarcina mazei (strain ATCC BAA-159 / DSM 3647 / Goe1 / Go1 / JCM 11833 / OCM 88) (Methanosarcina frisia).